We begin with the raw amino-acid sequence, 311 residues long: Tyrosine recombinase XerC (311 aa).

In terms of domain architecture, Core-binding (CB) spans 14–100; that stretch reads ESLNETAKKF…SLRTFYKVLL (87 aa). The 183-residue stretch at 121–303 folds into the Tyr recombinase domain; it reads EVPKNFRINE…SKEKIKEVYR (183 aa). Residues R163, K187, H255, R258, and H281 contribute to the active site. Y290 acts as the O-(3'-phospho-DNA)-tyrosine intermediate in catalysis.

It belongs to the 'phage' integrase family. XerC subfamily. As to quaternary structure, forms a cyclic heterotetrameric complex composed of two molecules of XerC and two molecules of XerD.

Its subcellular location is the cytoplasm. Functionally, site-specific tyrosine recombinase, which acts by catalyzing the cutting and rejoining of the recombining DNA molecules. The XerC-XerD complex is essential to convert dimers of the bacterial chromosome into monomers to permit their segregation at cell division. It also contributes to the segregational stability of plasmids. In Leptospira interrogans serogroup Icterohaemorrhagiae serovar copenhageni (strain Fiocruz L1-130), this protein is Tyrosine recombinase XerC.